The primary structure comprises 122 residues: Big defensin (122 aa).

The signal sequence occupies residues 1 to 28 (MTRPSLVRCYSLFFTALIVMAIICPAWS). A propeptide spanning residues 29–34 (EEIPKS) is cleaved from the precursor. 3 disulfide bridges follow: C88–C119, C95–C114, and C99–C120.

It belongs to the big defensin family. Expressed in hemocytes.

The protein resides in the secreted. Its function is as follows. Significantly inhibits the growth of Gram-negative and Gram-positive bacteria and fungi in vitro. In Argopecten irradians (Bay scallop), this protein is Big defensin.